The following is a 578-amino-acid chain: Probable acyl-activating enzyme 12, peroxisomal (578 aa).

The Microbody targeting signal signature appears at 576-578 (SRL).

It belongs to the ATP-dependent AMP-binding enzyme family. In terms of tissue distribution, expressed at low levels in leaves.

It localises to the peroxisome. May act as an acid--thiol ligase that activates carboxylic acids by forming acyl-CoAs. This chain is Probable acyl-activating enzyme 12, peroxisomal (AAE12), found in Arabidopsis thaliana (Mouse-ear cress).